Consider the following 1167-residue polypeptide: ATP-dependent helicase/deoxyribonuclease subunit B (1167 aa).

Residues M1–L359 enclose the UvrD-like helicase ATP-binding domain. G8–T15 is an ATP binding site. Positions V282–D588 constitute a UvrD-like helicase C-terminal domain. [4Fe-4S] cluster is bound by residues C803, C1125, C1128, and C1134.

The protein belongs to the helicase family. AddB/RexB type 1 subfamily. Heterodimer of AddA and AddB. Mg(2+) is required as a cofactor. The cofactor is [4Fe-4S] cluster.

In terms of biological role, the heterodimer acts as both an ATP-dependent DNA helicase and an ATP-dependent, dual-direction single-stranded exonuclease. Recognizes the chi site generating a DNA molecule suitable for the initiation of homologous recombination. The AddB subunit has 5' -&gt; 3' nuclease activity but not helicase activity. This Geobacillus thermodenitrificans (strain NG80-2) protein is ATP-dependent helicase/deoxyribonuclease subunit B.